A 475-amino-acid chain; its full sequence is Doublecortin domain-containing protein 2 (475 aa).

2 consecutive Doublecortin domains span residues 17-100 (KSVL…LNYL) and 139-221 (CTIF…LPYS). The interval 234 to 475 (YGQKASSLPP…EANKASSAVA (242 aa)) is disordered. The span at 252-272 (GSGNYRQSKSTIGSSDNSSPQ) shows a compositional bias: polar residues. Position 270 is a phosphoserine (serine 270). A compositionally biased stretch (basic and acidic residues) spans 353–365 (EKTSKDANQKEDF). The span at 407-425 (TDEENGEELDQVAEELQPT) shows a compositional bias: acidic residues.

Interacts with DVL1, DVL2 and DVL3. In terms of tissue distribution, expressed in hair cells of the inner ear.

It is found in the cell projection. The protein localises to the cilium. It localises to the cytoplasm. The protein resides in the cytoskeleton. Its subcellular location is the cilium axoneme. It is found in the kinocilium. Protein that plays a role in the inhibition of canonical Wnt signaling pathway. May be involved in neuronal migration during development of the cerebral neocortex. Involved in the control of ciliogenesis and ciliary length. This chain is Doublecortin domain-containing protein 2 (Dcdc2), found in Mus musculus (Mouse).